The following is a 558-amino-acid chain: Formate--tetrahydrofolate ligase (558 aa).

67 to 74 (TPAGEGKT) provides a ligand contact to ATP.

It belongs to the formate--tetrahydrofolate ligase family.

The enzyme catalyses (6S)-5,6,7,8-tetrahydrofolate + formate + ATP = (6R)-10-formyltetrahydrofolate + ADP + phosphate. Its pathway is one-carbon metabolism; tetrahydrofolate interconversion. The polypeptide is Formate--tetrahydrofolate ligase (Ruegeria sp. (strain TM1040) (Silicibacter sp.)).